The sequence spans 507 residues: ATP synthase subunit alpha, chloroplastic (507 aa).

Residue 170–177 (GDRQTGKT) coordinates ATP.

The protein belongs to the ATPase alpha/beta chains family. F-type ATPases have 2 components, CF(1) - the catalytic core - and CF(0) - the membrane proton channel. CF(1) has five subunits: alpha(3), beta(3), gamma(1), delta(1), epsilon(1). CF(0) has four main subunits: a, b, b' and c.

It localises to the plastid. Its subcellular location is the chloroplast thylakoid membrane. It carries out the reaction ATP + H2O + 4 H(+)(in) = ADP + phosphate + 5 H(+)(out). In terms of biological role, produces ATP from ADP in the presence of a proton gradient across the membrane. The alpha chain is a regulatory subunit. The sequence is that of ATP synthase subunit alpha, chloroplastic from Morus indica (Mulberry).